Reading from the N-terminus, the 1068-residue chain is Probable ATPase FE772_23070 (1068 aa).

217–224 contacts ATP; the sequence is GGGGAGKT.

Involved in defense against bacteriophages. When this probable 4 gene operon (bGSDM-FE772_23060-FE772_23065-FE772_23070) is inserted into E.coli it provides nearly 100-fold protection against phages T5 and T6 and about 8-fold against phage T4. The operon without bGSDM no longer protects against phage. Probably a nucleotide hydrolase, possibly of ATP. This chain is Probable ATPase FE772_23070, found in Lysobacter enzymogenes.